We begin with the raw amino-acid sequence, 257 residues long: Ribosomal RNA small subunit methyltransferase J (257 aa).

Residues 107-108, 123-124, and Asp177 contribute to the S-adenosyl-L-methionine site; these read RD and ER.

The protein belongs to the methyltransferase superfamily. RsmJ family.

It localises to the cytoplasm. It carries out the reaction guanosine(1516) in 16S rRNA + S-adenosyl-L-methionine = N(2)-methylguanosine(1516) in 16S rRNA + S-adenosyl-L-homocysteine + H(+). Specifically methylates the guanosine in position 1516 of 16S rRNA. This is Ribosomal RNA small subunit methyltransferase J from Haemophilus influenzae (strain PittEE).